We begin with the raw amino-acid sequence, 335 residues long: Ferredoxin--NADP reductase (335 aa).

FAD is bound by residues aspartate 34, glutamine 42, tyrosine 47, alanine 87, phenylalanine 121, aspartate 287, and threonine 328.

This sequence belongs to the ferredoxin--NADP reductase type 2 family. In terms of assembly, homodimer. Requires FAD as cofactor.

The catalysed reaction is 2 reduced [2Fe-2S]-[ferredoxin] + NADP(+) + H(+) = 2 oxidized [2Fe-2S]-[ferredoxin] + NADPH. The protein is Ferredoxin--NADP reductase of Rickettsia felis (strain ATCC VR-1525 / URRWXCal2) (Rickettsia azadi).